Here is a 394-residue protein sequence, read N- to C-terminus: Xylose isomerase (394 aa).

Active-site residues include histidine 54 and aspartate 57. Mg(2+) is bound by residues glutamate 181, glutamate 217, histidine 220, aspartate 245, aspartate 255, aspartate 257, and aspartate 292.

Belongs to the xylose isomerase family. As to quaternary structure, homotetramer. It depends on Mg(2+) as a cofactor.

The protein localises to the cytoplasm. It catalyses the reaction alpha-D-xylose = alpha-D-xylulofuranose. The polypeptide is Xylose isomerase (xylA) (Actinoplanes missouriensis (strain ATCC 14538 / DSM 43046 / CBS 188.64 / JCM 3121 / NBRC 102363 / NCIMB 12654 / NRRL B-3342 / UNCC 431)).